The primary structure comprises 595 residues: Alginate biosynthesis sensor protein KinB (595 aa).

Residues 1–12 (MSMPLPMKLRTR) are Cytoplasmic-facing. A helical transmembrane segment spans residues 13-33 (LFLSISALITVSLFGLLLGLF). Topologically, residues 34–167 (SVMQLGRAQE…SDAETSARHR (134 aa)) are periplasmic. The chain crosses the membrane as a helical span at residues 168–188 (AYLVAGLLGLVGVAILLIGFV). Residues 189–595 (TAHSIARRFG…GARFYMLLPV (407 aa)) lie on the Cytoplasmic side of the membrane. Residues 195–247 (RRFGAPIETLARAADRIGEGDFDVTLPMTNVAEVGQLTRRFGLMAEALRQYRK) form the HAMP domain. In terms of domain architecture, PAS spans 258–323 (RRLQAVLDSI…AVEKALLGEV (66 aa)). One can recognise a PAC domain in the interval 327–369 (AMPDLVVDVAGESRLLAWSLYPVTHPGGHSVGAVLVVRDVTEQ). Residues 382 to 595 (RASHELRTPV…GARFYMLLPV (214 aa)) form the Histidine kinase domain. His385 is modified (phosphohistidine; by autocatalysis).

Post-translationally, autophosphorylated.

The protein resides in the cell inner membrane. The catalysed reaction is ATP + protein L-histidine = ADP + protein N-phospho-L-histidine.. In terms of biological role, member of the two-component regulatory system AlgB/KinB involved in regulation of alginate biosynthesis genes. KinB functions as a membrane-associated protein kinase that phosphorylates AlgB, probably in response to environmental signals. This is Alginate biosynthesis sensor protein KinB (kinB) from Pseudomonas aeruginosa.